Consider the following 190-residue polypeptide: Guanylate kinase (190 aa).

The Guanylate kinase-like domain maps to 7–186 (GKLIVFSAPS…AVDDVEAAIV (180 aa)). Residue 14 to 21 (APSGAGKT) coordinates ATP.

The protein belongs to the guanylate kinase family.

The protein resides in the cytoplasm. It carries out the reaction GMP + ATP = GDP + ADP. Functionally, essential for recycling GMP and indirectly, cGMP. This Chlorobium chlorochromatii (strain CaD3) protein is Guanylate kinase.